Reading from the N-terminus, the 204-residue chain is HTH-type transcriptional repressor KstR2 (204 aa).

Positions 13–73 constitute an HTH tetR-type domain; the sequence is SGRRTELLDI…EILRGFLDDL (61 aa). The H-T-H motif DNA-binding region spans 36–55; sequence TVRDIADAAGILSGSLYHHF.

In terms of assembly, homodimer.

In terms of biological role, controls the expression of a small regulon that may play a role in the utilization of cholesterol. This is HTH-type transcriptional repressor KstR2 (kstR2) from Rhodococcus jostii (strain RHA1).